Here is a 245-residue protein sequence, read N- to C-terminus: Uridylate kinase (245 aa).

Position 12 to 15 (12 to 15 (KLSG)) interacts with ATP. Residues 20–25 (GEKGVG) form an involved in allosteric activation by GTP region. A UMP-binding site is contributed by G54. G55 and R59 together coordinate ATP. Residues D74 and 135-142 (VGSPYFST) contribute to the UMP site. The ATP site is built by N163, Y169, and D172.

Belongs to the UMP kinase family. In terms of assembly, homohexamer.

It localises to the cytoplasm. The enzyme catalyses UMP + ATP = UDP + ADP. Its pathway is pyrimidine metabolism; CTP biosynthesis via de novo pathway; UDP from UMP (UMPK route): step 1/1. Allosterically activated by GTP. Inhibited by UTP. In terms of biological role, catalyzes the reversible phosphorylation of UMP to UDP. This chain is Uridylate kinase, found in Streptococcus mutans serotype c (strain ATCC 700610 / UA159).